The primary structure comprises 102 residues: MKKVLALVVAAAMGLSSAAFAAETTTTPAPTATTTKAAPAKTTHHKKQHKAAPAQKAQAAKKHHKNTKAEQKAPEQKAQAAKKHAKKHSHQQPAKPAAQPAA.

Positions 1-21 (MKKVLALVVAAAMGLSSAAFA) are cleaved as a signal peptide. The span at 21-41 (AAETTTTPAPTATTTKAAPAK) shows a compositional bias: low complexity. The tract at residues 21–102 (AAETTTTPAP…PAKPAAQPAA (82 aa)) is disordered. Positions 22–58 (AETTTTPAPTATTTKAAPAKTTHHKKQHKAAPAQKAQ) are excised as a propeptide. The segment covering 80–90 (AAKKHAKKHSH) has biased composition (basic residues). Low complexity predominate over residues 91–102 (QQPAKPAAQPAA).

The protein belongs to the Asr family. Proteolytic processing gives rise to the active protein.

The protein localises to the periplasm. Required for growth and/or survival at acidic conditions. This is Acid shock protein from Escherichia coli (strain K12 / MC4100 / BW2952).